The chain runs to 469 residues: Glutamate--tRNA ligase (469 aa).

A 'HIGH' region motif is present at residues 11 to 21 (PSPTGFIHLGN). Positions 243–247 (KMSKR) match the 'KMSKS' region motif. K246 is a binding site for ATP.

This sequence belongs to the class-I aminoacyl-tRNA synthetase family. Glutamate--tRNA ligase type 1 subfamily. In terms of assembly, monomer.

Its subcellular location is the cytoplasm. It carries out the reaction tRNA(Glu) + L-glutamate + ATP = L-glutamyl-tRNA(Glu) + AMP + diphosphate. Functionally, catalyzes the attachment of glutamate to tRNA(Glu) in a two-step reaction: glutamate is first activated by ATP to form Glu-AMP and then transferred to the acceptor end of tRNA(Glu). This Burkholderia ambifaria (strain MC40-6) protein is Glutamate--tRNA ligase.